Consider the following 372-residue polypeptide: Monocyte differentiation antigen CD14 (372 aa).

An N-terminal signal peptide occupies residues 1–17; sequence MKLMLGLLLLPLTLVHA. 2 disulfide bridges follow: cysteine 25–cysteine 38 and cysteine 36–cysteine 53. N-linked (GlcNAc...) asparagine glycosylation is found at asparagine 39 and asparagine 46. 11 LRR repeats span residues 57-84, 85-120, 121-146, 147-174, 175-198, 199-226, 227-253, 254-278, 279-299, 300-321, and 322-346; these read EDVE…LGQY, TDII…YSGL, RELT…GPDL, NTLS…KPGL, KVLS…FPAL, ATLD…FPTL, QVLA…RVPL, QALD…PSQL, NSLN…PAKL, SVLD…LPEV, and GSLS…SGVV. Asparagine 153 and asparagine 186 each carry an N-linked (GlcNAc...) asparagine glycan. 2 disulfide bridges follow: cysteine 189/cysteine 219 and cysteine 243/cysteine 272. N-linked (GlcNAc...) asparagine glycosylation is present at asparagine 282. The required for response to bacterial lipopolysaccharide (LPS) stretch occupies residues 290 to 372; sequence HVPKGLPAKL…ALLLGHRLFV (83 aa). A lipid anchor (GPI-anchor amidated asparagine) is attached at asparagine 342. The propeptide at 343-372 is removed in mature form; sequence SGVVIATALSPGSAGLSGTLALLLGHRLFV.

In terms of assembly, belongs to the lipopolysaccharide (LPS) receptor, a multi-protein complex containing at least CD14, LY96 and TLR4. Interacts with LPS-bound LPB. Interacts with LPAR1. Interacts with the TLR2:TLR6 or TLR2:TLR1 heterodimers; upon interaction with ligands such as diacylated lipopeptides and triacylated lipopeptides, respectively. Interacts with MYO18A. Interacts with FSTL1. Detected in macrophages and peripheral blood monocytes.

The protein resides in the cell membrane. The protein localises to the secreted. It localises to the membrane raft. It is found in the golgi apparatus. Its function is as follows. Coreceptor for bacterial lipopolysaccharide. In concert with LBP, binds to monomeric lipopolysaccharide and delivers it to the LY96/TLR4 complex, thereby mediating the innate immune response to bacterial lipopolysaccharide (LPS). Acts via MyD88, TIRAP and TRAF6, leading to NF-kappa-B activation, cytokine secretion and the inflammatory response. Acts as a coreceptor for TLR2:TLR6 heterodimer in response to diacylated lipopeptides and for TLR2:TLR1 heterodimer in response to triacylated lipopeptides, these clusters trigger signaling from the cell surface and subsequently are targeted to the Golgi in a lipid-raft dependent pathway. Binds electronegative LDL (LDL(-)) and mediates the cytokine release induced by LDL(-). The chain is Monocyte differentiation antigen CD14 (Cd14) from Rattus norvegicus (Rat).